The chain runs to 51 residues: Large ribosomal subunit protein eL39 (51 aa).

Belongs to the eukaryotic ribosomal protein eL39 family.

The protein is Large ribosomal subunit protein eL39 of Picrophilus torridus (strain ATCC 700027 / DSM 9790 / JCM 10055 / NBRC 100828 / KAW 2/3).